The chain runs to 485 residues: Glycogen synthase (485 aa).

Lysine 21 serves as a coordination point for ADP-alpha-D-glucose.

Belongs to the glycosyltransferase 1 family. Bacterial/plant glycogen synthase subfamily.

The catalysed reaction is [(1-&gt;4)-alpha-D-glucosyl](n) + ADP-alpha-D-glucose = [(1-&gt;4)-alpha-D-glucosyl](n+1) + ADP + H(+). It participates in glycan biosynthesis; glycogen biosynthesis. Its function is as follows. Synthesizes alpha-1,4-glucan chains using ADP-glucose. The protein is Glycogen synthase of Pseudomonas savastanoi pv. phaseolicola (strain 1448A / Race 6) (Pseudomonas syringae pv. phaseolicola (strain 1448A / Race 6)).